Reading from the N-terminus, the 391-residue chain is 23S rRNA (uracil(747)-C(5))-methyltransferase RlmC (391 aa).

4 residues coordinate [4Fe-4S] cluster: Cys5, Cys13, Cys16, and Cys95. S-adenosyl-L-methionine is bound by residues Gln220, Phe249, Glu276, and Asn322. The active-site Nucleophile is Cys349.

This sequence belongs to the class I-like SAM-binding methyltransferase superfamily. RNA M5U methyltransferase family. RlmC subfamily.

The catalysed reaction is uridine(747) in 23S rRNA + S-adenosyl-L-methionine = 5-methyluridine(747) in 23S rRNA + S-adenosyl-L-homocysteine + H(+). Its function is as follows. Catalyzes the formation of 5-methyl-uridine at position 747 (m5U747) in 23S rRNA. The chain is 23S rRNA (uracil(747)-C(5))-methyltransferase RlmC from Actinobacillus pleuropneumoniae serotype 5b (strain L20).